The chain runs to 91 residues: Preprofallaxidin-2 (91 aa).

The signal sequence occupies residues 1–22; the sequence is MASLKKSLFLVLFLGLVSLSIC. Positions 23–49 are excised as a propeptide; it reads EKEKRENEGNENEEEEENHEEGSEEKR. Residues 24–49 form a disordered region; that stretch reads KEKRENEGNENEEEEENHEEGSEEKR. The span at 31–41 shows a compositional bias: acidic residues; sequence GNENEEEEENH. Leucine 65 is subject to Leucine amide. A propeptide spanning residues 69 to 73 is cleaved from the precursor; it reads SEEKR. Leucine 89 bears the Leucine amide mark.

Belongs to the frog skin active peptide (FSAP) family. Dermaseptin subfamily. In terms of tissue distribution, expressed by the skin glands.

The protein resides in the secreted. Its function is as follows. Fallaxidin-3.1 shows antibacterial activity against the Gram-positive bacteria E.faecalis (MIC=100 uM) and L.lactis (MIC=100 uM). No antibacterial activity against the Gram-positive bacteria B.cereus, L.innocua, M.luteus, S.epidermidis, S.uberis and S.aureus, or the Gram-negative bacteria E.cloacae and E.coli. Fallaxidin-3.2 shows antibacterial activity against the Gram-positive bacteria E.faecalis (MIC=100 uM) and L.lactis (MIC=500 uM). No antibacterial activity against the Gram-positive bacteria B.cereus, L.innocua, M.luteus, S.epidermidis, S.uberis and S.aureus, or the Gram-negative bacteria E.cloacae and E.coli. The chain is Preprofallaxidin-2 from Litoria fallax (Eastern dwarf tree frog).